The following is a 100-amino-acid chain: Small ribosomal subunit protein uS14c (100 aa).

Belongs to the universal ribosomal protein uS14 family. Part of the 30S ribosomal subunit.

The protein resides in the plastid. It localises to the chloroplast. Binds 16S rRNA, required for the assembly of 30S particles. In Gossypium barbadense (Sea Island cotton), this protein is Small ribosomal subunit protein uS14c.